A 455-amino-acid polypeptide reads, in one-letter code: MYKCALVLAAGQGKRIKSDLPKVLHKVCGKEMLKHVIDSIRKSGIDDIDVIIGKGAELVKERTLDRNVSYSMQAEQLGTGHAVKCAEEFLKDKKGVVAIFTGDTPLIKQSTIERLFNEHIEAKNSATILTAIVNDPTGYGRIVRTNDGVSKIVEHKDCTEEELKINEMNSGIYCFDIELLVDALNKITNNNGQGEYYLTDAIGILKSQGKKIGAVVTEYEETIGVNSRVQLAEAEEILKNRINLMHMENGVTLIDPRTTYIGIDVEIGKDTIIYPNNILEGNTKIGNNCLIYQNSRIVDSNIGNEVDVQASVILNSNIGDNTTVGPFAYIRPETTIGKHARIGDFVEIKKSTIGDGTKVSHLTYIGDAEVGSECNFGCGTVVVNYDGKNKHKTIIGDHSFIGCNTNLVSPVTIHDNTYIAAGSTITSEVKEGDLAVARAKQRNISGWVDKKGLKK.

Positions 1-228 are pyrophosphorylase; that stretch reads MYKCALVLAA…YEETIGVNSR (228 aa). Residues 8 to 11, K22, Q73, and 78 to 79 each bind UDP-N-acetyl-alpha-D-glucosamine; these read LAAG and GT. Residue D103 coordinates Mg(2+). Residues G140, E154, N169, and N226 each coordinate UDP-N-acetyl-alpha-D-glucosamine. N226 is a binding site for Mg(2+). Residues 229 to 249 form a linker region; it reads VQLAEAEEILKNRINLMHMEN. Residues 250 to 455 form an N-acetyltransferase region; it reads GVTLIDPRTT…GWVDKKGLKK (206 aa). Residues R331 and K349 each coordinate UDP-N-acetyl-alpha-D-glucosamine. H361 acts as the Proton acceptor in catalysis. Residues Y364 and N375 each coordinate UDP-N-acetyl-alpha-D-glucosamine. Acetyl-CoA-binding positions include 384–385, A421, and R438; that span reads NY.

The protein in the N-terminal section; belongs to the N-acetylglucosamine-1-phosphate uridyltransferase family. In the C-terminal section; belongs to the transferase hexapeptide repeat family. In terms of assembly, homotrimer. Mg(2+) is required as a cofactor.

The protein resides in the cytoplasm. The catalysed reaction is alpha-D-glucosamine 1-phosphate + acetyl-CoA = N-acetyl-alpha-D-glucosamine 1-phosphate + CoA + H(+). It carries out the reaction N-acetyl-alpha-D-glucosamine 1-phosphate + UTP + H(+) = UDP-N-acetyl-alpha-D-glucosamine + diphosphate. Its pathway is nucleotide-sugar biosynthesis; UDP-N-acetyl-alpha-D-glucosamine biosynthesis; N-acetyl-alpha-D-glucosamine 1-phosphate from alpha-D-glucosamine 6-phosphate (route II): step 2/2. It functions in the pathway nucleotide-sugar biosynthesis; UDP-N-acetyl-alpha-D-glucosamine biosynthesis; UDP-N-acetyl-alpha-D-glucosamine from N-acetyl-alpha-D-glucosamine 1-phosphate: step 1/1. It participates in bacterial outer membrane biogenesis; LPS lipid A biosynthesis. Functionally, catalyzes the last two sequential reactions in the de novo biosynthetic pathway for UDP-N-acetylglucosamine (UDP-GlcNAc). The C-terminal domain catalyzes the transfer of acetyl group from acetyl coenzyme A to glucosamine-1-phosphate (GlcN-1-P) to produce N-acetylglucosamine-1-phosphate (GlcNAc-1-P), which is converted into UDP-GlcNAc by the transfer of uridine 5-monophosphate (from uridine 5-triphosphate), a reaction catalyzed by the N-terminal domain. The chain is Bifunctional protein GlmU from Clostridium beijerinckii (strain ATCC 51743 / NCIMB 8052) (Clostridium acetobutylicum).